The sequence spans 612 residues: Transcription factor unc-37 (612 aa).

Positions 143-228 are disordered; sequence FASPHVNGGD…SNSRARQQQQ (86 aa). The span at 150-159 shows a compositional bias: gly residues; the sequence is GGDGAGGSSG. The segment at 153–196 is CCN domain; that stretch reads GAGGSSGGASEAKKAKLEDPDDGELEIDVTNDDHPSTASNGGAA. The span at 171 to 182 shows a compositional bias: acidic residues; the sequence is DPDDGELEIDVT. Residues 202–221 show a composition bias toward polar residues; sequence DSTNSVASSGASTPSIASNS. WD repeat units follow at residues 308–339, 372–402, 414–444, 456–486, 538–568, and 579–609; these read GIPTGLKKKMELNHGEVVCAATISRDNSRVYT, LKENYIRSCKLFEDGNTLLIGGEASTVALWD, TDSQACYALAMSPDEKLLFACLADGNILIYD, GHQDGASCLDLSKDGTKLWSGGLDNSVRCWD, QHESCVLSLKFAHSGKFFISTGKDNALNAWR, and KENSSVLSCDISFDDSLIVTGSGEKKATLYA.

This sequence belongs to the WD repeat Groucho/TLE family. Interacts with unc-4. Interacts with ref-1. May interact with mls-1.

It localises to the nucleus. In terms of biological role, transcriptional corepressor that functions with the neural specificity gene unc-4 to govern motor neuron identity. In concert with unc-4, represses the expression of VB-specific genes such as ceh-12, thereby preventing the adoption of VB motor neuron fate. May function with transcription factor mls-1 to promote uterine muscle specification and formation. The chain is Transcription factor unc-37 (unc-37) from Caenorhabditis elegans.